Here is a 553-residue protein sequence, read N- to C-terminus: Fusion glycoprotein F0 (553 aa).

An N-terminal signal peptide occupies residues 1–31 (MASRSSTRIPAPLMLTIWIALALGCVRLTSS). The Extracellular segment spans residues 32-500 (LDGRPLAAAG…VNVRLTNTSA (469 aa)). Cystine bridges form between Cys-76–Cys-199, Cys-338–Cys-347, Cys-362–Cys-370, Cys-394–Cys-399, and Cys-401–Cys-424. An N-linked (GlcNAc...) asparagine; by host glycan is attached at Asn-85. The tract at residues 117–141 (FIGAIIGSVALGVATAAQITAASAL) is fusion peptide. Positions 142 to 170 (IQANQNAANILRLKESIAATNEAVHEVTD) form a coiled coil. Residues Asn-191 and Asn-192 are each glycosylated (N-linked (GlcNAc...) asparagine; by host). N-linked (GlcNAc...) asparagine; by host glycosylation is present at Asn-366. Residues Asn-447 and Asn-471 are each glycosylated (N-linked (GlcNAc...) asparagine; by host). Residues 466–491 (ELGNANNSISNALNKLEESNSKLDKV) adopt a coiled-coil conformation. Residues 501–521 (LITYIVLTVISLVCGILSLVL) traverse the membrane as a helical segment. The Cytoplasmic segment spans residues 522-553 (ACYLMHKQKAQQKTLLWLGNNTLDQMRATTKA). Cys-523 is lipidated: S-palmitoyl cysteine; by host.

The protein belongs to the paramyxoviruses fusion glycoprotein family. As to quaternary structure, homotrimer of disulfide-linked F1-F2. In terms of processing, the inactive precursor F0 is glycosylated and proteolytically cleaved into F1 and F2 to be functionally active. The cleavage is mediated by cellular proteases during the transport and maturation of the polypeptide.

Its subcellular location is the virion membrane. It is found in the host cell membrane. In terms of biological role, class I viral fusion protein. Under the current model, the protein has at least 3 conformational states: pre-fusion native state, pre-hairpin intermediate state, and post-fusion hairpin state. During viral and plasma cell membrane fusion, the heptad repeat (HR) regions assume a trimer-of-hairpins structure, positioning the fusion peptide in close proximity to the C-terminal region of the ectodomain. The formation of this structure appears to drive apposition and subsequent fusion of viral and plasma cell membranes. Directs fusion of viral and cellular membranes leading to delivery of the nucleocapsid into the cytoplasm. This fusion is pH independent and occurs directly at the outer cell membrane. The trimer of F1-F2 (F protein) probably interacts with HN at the virion surface. Upon HN binding to its cellular receptor, the hydrophobic fusion peptide is unmasked and interacts with the cellular membrane, inducing the fusion between cell and virion membranes. Later in infection, F proteins expressed at the plasma membrane of infected cells could mediate fusion with adjacent cells to form syncytia, a cytopathic effect that could lead to tissue necrosis. The chain is Fusion glycoprotein F0 (F) from Gallus gallus (Chicken).